Here is a 57-residue protein sequence, read N- to C-terminus: UPF0391 membrane protein Atu4467 (57 aa).

2 helical membrane-spanning segments follow: residues 4-24 (WALIFFVISLIAGVFGFTGIS) and 33-53 (ILFFIAVVIFLVFLVLALMAG).

The protein belongs to the UPF0391 family.

The protein localises to the cell membrane. The chain is UPF0391 membrane protein Atu4467 from Agrobacterium fabrum (strain C58 / ATCC 33970) (Agrobacterium tumefaciens (strain C58)).